The following is a 284-amino-acid chain: Phosphatidylglycerol--prolipoprotein diacylglyceryl transferase (284 aa).

7 helical membrane passes run 21–41 (IEVH…FYMA), 62–82 (YFLW…ILIY), 106–126 (FVGI…IASY), 136–156 (LLIY…FGRI), 190–210 (PSQL…VMWA), 218–238 (GLLI…AEFY), and 252–272 (LSMG…ILLY). Arg-155 contacts a 1,2-diacyl-sn-glycero-3-phospho-(1'-sn-glycerol).

It belongs to the Lgt family.

The protein localises to the cell inner membrane. The enzyme catalyses L-cysteinyl-[prolipoprotein] + a 1,2-diacyl-sn-glycero-3-phospho-(1'-sn-glycerol) = an S-1,2-diacyl-sn-glyceryl-L-cysteinyl-[prolipoprotein] + sn-glycerol 1-phosphate + H(+). It functions in the pathway protein modification; lipoprotein biosynthesis (diacylglyceryl transfer). Its function is as follows. Catalyzes the transfer of the diacylglyceryl group from phosphatidylglycerol to the sulfhydryl group of the N-terminal cysteine of a prolipoprotein, the first step in the formation of mature lipoproteins. The polypeptide is Phosphatidylglycerol--prolipoprotein diacylglyceryl transferase (Helicobacter pylori (strain P12)).